Here is a 247-residue protein sequence, read N- to C-terminus: DNA repair protein RecO (247 aa).

Belongs to the RecO family.

Its function is as follows. Involved in DNA repair and RecF pathway recombination. The sequence is that of DNA repair protein RecO from Brucella abortus (strain 2308).